Consider the following 291-residue polypeptide: Gamma-sarcoglycan (291 aa).

The chain crosses the membrane as a helical; Signal-anchor for type II membrane protein span at residues 38-58; the sequence is LFVLLLLIILLVNFALTIWIL. At 59–291 the chain is on the extracellular side; that stretch reads KVMWFSPTGM…TCHEHSHICL (233 aa). Asn-110 carries an N-linked (GlcNAc...) asparagine glycan. 2 disulfides stabilise this stretch: Cys-265/Cys-290 and Cys-267/Cys-283.

Belongs to the sarcoglycan beta/delta/gamma/zeta family. Interacts with the syntrophin SNTA1. Cross-link to form 2 major subcomplexes: one consisting of SGCB, SGCD and SGCG and the other consisting of SGCB and SGCD. The association between SGCB and SGCG is particularly strong while SGCA is loosely associated with the other sarcoglycans. Interacts with FLNC. In terms of processing, disulfide bonds are present.

Its subcellular location is the cell membrane. The protein localises to the sarcolemma. It localises to the cytoplasm. The protein resides in the cytoskeleton. Component of the sarcoglycan complex, a subcomplex of the dystrophin-glycoprotein complex which forms a link between the F-actin cytoskeleton and the extracellular matrix. The protein is Gamma-sarcoglycan (SGCG) of Canis lupus familiaris (Dog).